Reading from the N-terminus, the 350-residue chain is Holliday junction branch migration complex subunit RuvB (350 aa).

The interval 1–184 is large ATPase domain (RuvB-L); sequence MSKTPERLVT…FGIPIRLEFY (184 aa). Residues Leu-23, Arg-24, Gly-65, Lys-68, Thr-69, Thr-70, 131–133, Arg-174, Tyr-184, and Arg-221 contribute to the ATP site; that span reads EDF. Residue Thr-69 coordinates Mg(2+). The interval 185–255 is small ATPAse domain (RuvB-S); it reads TIEELERIVL…LADKALSLLD (71 aa). Residues 258 to 350 are head domain (RuvB-H); it reads PIGLDQMDRR…GLFPDQSEED (93 aa). Residues Arg-294, Arg-313, and Arg-318 each coordinate DNA.

It belongs to the RuvB family. Homohexamer. Forms an RuvA(8)-RuvB(12)-Holliday junction (HJ) complex. HJ DNA is sandwiched between 2 RuvA tetramers; dsDNA enters through RuvA and exits via RuvB. An RuvB hexamer assembles on each DNA strand where it exits the tetramer. Each RuvB hexamer is contacted by two RuvA subunits (via domain III) on 2 adjacent RuvB subunits; this complex drives branch migration. In the full resolvosome a probable DNA-RuvA(4)-RuvB(12)-RuvC(2) complex forms which resolves the HJ.

The protein resides in the cytoplasm. It carries out the reaction ATP + H2O = ADP + phosphate + H(+). The RuvA-RuvB-RuvC complex processes Holliday junction (HJ) DNA during genetic recombination and DNA repair, while the RuvA-RuvB complex plays an important role in the rescue of blocked DNA replication forks via replication fork reversal (RFR). RuvA specifically binds to HJ cruciform DNA, conferring on it an open structure. The RuvB hexamer acts as an ATP-dependent pump, pulling dsDNA into and through the RuvAB complex. RuvB forms 2 homohexamers on either side of HJ DNA bound by 1 or 2 RuvA tetramers; 4 subunits per hexamer contact DNA at a time. Coordinated motions by a converter formed by DNA-disengaged RuvB subunits stimulates ATP hydrolysis and nucleotide exchange. Immobilization of the converter enables RuvB to convert the ATP-contained energy into a lever motion, pulling 2 nucleotides of DNA out of the RuvA tetramer per ATP hydrolyzed, thus driving DNA branch migration. The RuvB motors rotate together with the DNA substrate, which together with the progressing nucleotide cycle form the mechanistic basis for DNA recombination by continuous HJ branch migration. Branch migration allows RuvC to scan DNA until it finds its consensus sequence, where it cleaves and resolves cruciform DNA. This chain is Holliday junction branch migration complex subunit RuvB, found in Beijerinckia indica subsp. indica (strain ATCC 9039 / DSM 1715 / NCIMB 8712).